The primary structure comprises 180 residues: Insulin-like growth factor 2 (180 aa).

A signal peptide spans 1 to 24 (MGIPMGKSMLVLLTFLAFASCCIA). The tract at residues 25–52 (AYRPSETLCGGELVDTLQFVCGDRGFYF) is b. 3 disulfides stabilise this stretch: Cys-33/Cys-71, Cys-45/Cys-84, and Cys-70/Cys-75. Residues 53-64 (SRPASRVSRRSR) are c. The a stretch occupies residues 65–85 (GIVEECCFRSCDLALLETYCA). A d region spans residues 86–91 (TPAKSE). The propeptide at 92 to 180 (RDVSTPPTVL…APPEMASNRK (89 aa)) is e peptide. O-linked (GalNAc...) threonine glycans are attached at residues Thr-96, Thr-99, and Thr-163. The interval 161–180 (LPTQDPAHGGAPPEMASNRK) is disordered.

Belongs to the insulin family. In terms of assembly, interacts with MYORG; this interaction is required for IGF2 secretion. Interacts with integrins ITGAV:ITGB3 and ITGA6:ITGB4; integrin-binding is required for IGF2 signaling. Interacts with IGFBP2. O-glycosylated with core 1 or possibly core 8 glycans. Thr-96 is a minor glycosylation site compared to Thr-99. In terms of processing, proteolytically processed by PCSK4, proIGF2 is cleaved at Arg-128 and Arg-92 to generate big-IGF2 and mature IGF2. As to expression, expressed in heart, placenta, lung, liver, muscle, kidney, tongue, limb, eye and pancreas.

The protein resides in the secreted. Functionally, the insulin-like growth factors possess growth-promoting activity. Major fetal growth hormone in mammals. Plays a key role in regulating fetoplacental development. IGF2 is influenced by placental lactogen. Also involved in tissue differentiation. In adults, involved in glucose metabolism in adipose tissue, skeletal muscle and liver. Acts as a ligand for integrin which is required for IGF2 signaling. Positively regulates myogenic transcription factor MYOD1 function by facilitating the recruitment of transcriptional coactivators, thereby controlling muscle terminal differentiation. Inhibits myoblast differentiation and modulates metabolism via increasing the mitochondrial respiration rate. Preptin undergoes glucose-mediated co-secretion with insulin, and acts as a physiological amplifier of glucose-mediated insulin secretion. Exhibits osteogenic properties by increasing osteoblast mitogenic activity through phosphoactivation of MAPK1 and MAPK3. The sequence is that of Insulin-like growth factor 2 from Homo sapiens (Human).